We begin with the raw amino-acid sequence, 1123 residues long: Ubiquitin carboxyl-terminal hydrolase 43 (1123 aa).

Residues methionine 1–glycine 102 are disordered. The segment covering arginine 17–phenylalanine 28 has biased composition (basic residues). Low complexity predominate over residues serine 29 to serine 39. The USP domain maps to glutamine 101 to arginine 710. The active-site Nucleophile is cysteine 110. The tract at residues glutamate 202–serine 221 is disordered. Histidine 668 functions as the Proton acceptor in the catalytic mechanism. The residue at position 746 (arginine 746) is an Asymmetric dimethylarginine. Disordered regions lie at residues isoleucine 795–proline 826, threonine 854–glycine 886, phenylalanine 959–glutamate 1049, and serine 1068–tyrosine 1099. Serine 969 carries the phosphoserine modification. Basic and acidic residues predominate over residues lysine 979–arginine 990. Positions valine 1016 to serine 1027 are enriched in low complexity. Serine 1041 carries the phosphoserine modification.

This sequence belongs to the peptidase C19 family. As to expression, expressed in brain, aorta and lung at low levels.

It catalyses the reaction Thiol-dependent hydrolysis of ester, thioester, amide, peptide and isopeptide bonds formed by the C-terminal Gly of ubiquitin (a 76-residue protein attached to proteins as an intracellular targeting signal).. Functionally, may recognize and hydrolyze the peptide bond at the C-terminal Gly of ubiquitin. Involved in the processing of poly-ubiquitin precursors as well as that of ubiquitinated proteins. The polypeptide is Ubiquitin carboxyl-terminal hydrolase 43 (USP43) (Homo sapiens (Human)).